Consider the following 457-residue polypeptide: Cell division cycle 20.1, cofactor of APC complex (457 aa).

WD repeat units follow at residues 138-175, 180-219, 223-260, 264-303, 312-354, 356-397, and 400-439; these read VDDF…TSEL, EEKG…QLRT, GHQS…PIVE, GHTQ…SNST, EHTS…CLNS, DTGS…KMAE, and GHTS…ETAK.

Belongs to the WD repeat CDC20/Fizzy family. The APC/C is composed of at least 11 subunits that stay tightly associated throughout the cell cycle. Interacts with APC10, FZR1, FZR2, FZR3. Binds to GIG1 and PYM. Part of the mitotic checkpoint complex (MCC); interacts with MAD2, BUB3.1, BUBR1 and BUB1. Binds to cyclins CYCA1-2, CYCB2-1 and CYCB2-2. Interacts with PANS1. In terms of tissue distribution, expressed in meristems and organ primordia. Present in flowers, leaves, stems, roots, pollen grains and developing seeds.

It is found in the nucleus. It participates in protein modification; protein ubiquitination. Functionally, component of the anaphase promoting complex/cyclosome (APC/C), a cell cycle-regulated E3 ubiquitin-protein ligase complex that controls progression through mitosis and the G1 phase of the cell cycle. The protein is Cell division cycle 20.1, cofactor of APC complex (CDC20-1) of Arabidopsis thaliana (Mouse-ear cress).